A 431-amino-acid polypeptide reads, in one-letter code: STE20-related kinase adapter protein alpha (431 aa).

Phosphoserine occurs at positions 2 and 46. The Protein kinase domain maps to 69–379 (YELLTVIGKG…ASTLLNHSFF (311 aa)). A disordered region spans residues 310-347 (LTMSPSRSVANSGLSDSLTTSTPRPSNGDSPSHPYHRT). Polar residues predominate over residues 312–339 (MSPSRSVANSGLSDSLTTSTPRPSNGDS). Residues Thr-329 and Thr-401 each carry the phosphothreonine; by LKB1 modification. Thr-419 is subject to Phosphothreonine.

Belongs to the protein kinase superfamily. STE Ser/Thr protein kinase family. STE20 subfamily. As to quaternary structure, component of a trimeric complex composed of STK11/LKB1, STRAD (STRADA or STRADB) and CAB39/MO25 (CAB39/MO25alpha or CAB39L/MO25beta): the complex tethers STK11/LKB1 in the cytoplasm and stimulates its catalytic activity.

Its subcellular location is the nucleus. The protein localises to the cytoplasm. Pseudokinase which, in complex with CAB39/MO25 (CAB39/MO25alpha or CAB39L/MO25beta), binds to and activates STK11/LKB1. Adopts a closed conformation typical of active protein kinases and binds STK11/LKB1 as a pseudosubstrate, promoting conformational change of STK11/LKB1 in an active conformation. The chain is STE20-related kinase adapter protein alpha (STRADA) from Pongo abelii (Sumatran orangutan).